Consider the following 140-residue polypeptide: MKTAIYPGSFNPFHNGHLNILKKAILLFDKVYVVVSKNINKSLDPDLQSRVKNIKNLIRDFNNVEIIINENKLTTTIAKELNASFIIRGLRSQTDFEYEIKYYDGFKSLYPNIEVIYFISDYDKRSLSSTILREIEFYKK.

Serine 9 contributes to the substrate binding site. Residues 9-10 and histidine 17 contribute to the ATP site; that span reads SF. Positions 41, 74, and 88 each coordinate substrate. Residues 89–91, glutamate 99, and 124–130 each bind ATP; these read GLR and KRSLSST.

Belongs to the bacterial CoaD family. As to quaternary structure, homohexamer. Mg(2+) is required as a cofactor.

The protein localises to the cytoplasm. The enzyme catalyses (R)-4'-phosphopantetheine + ATP + H(+) = 3'-dephospho-CoA + diphosphate. The protein operates within cofactor biosynthesis; coenzyme A biosynthesis; CoA from (R)-pantothenate: step 4/5. Reversibly transfers an adenylyl group from ATP to 4'-phosphopantetheine, yielding dephospho-CoA (dPCoA) and pyrophosphate. The chain is Phosphopantetheine adenylyltransferase from Mycoplasma mycoides subsp. mycoides SC (strain CCUG 32753 / NCTC 10114 / PG1).